Here is a 1745-residue protein sequence, read N- to C-terminus: DNA-directed RNA polymerase II subunit RPB1 (1745 aa).

Zn(2+) contacts are provided by Cys67, Cys70, Cys77, His80, Cys107, Cys110, Cys148, and Cys167. Residues Asp481, Asp483, and Asp485 each contribute to the Mg(2+) site. The segment at 810–822 is bridging helix; that stretch reads PQEFFFHAMGGRE. A Glycyl lysine isopeptide (Lys-Gly) (interchain with G-Cter in ubiquitin) cross-link involves residue Lys1247. Positions 1530–1745 are disordered; the sequence is NGPTSPGFGD…KEQKDENGTH (216 aa). Residues 1546-1730 are compositionally biased toward low complexity; sequence SPTSPAYSPT…SPRSPSYSPS (185 aa). 24 consecutive repeat copies span residues 1552-1558, 1559-1565, 1566-1572, 1573-1579, 1580-1586, 1587-1593, 1594-1600, 1601-1607, 1608-1614, 1615-1621, 1622-1628, 1629-1635, 1636-1642, 1643-1649, 1650-1656, 1657-1663, 1664-1670, 1671-1677, 1678-1684, 1685-1691, 1692-1698, 1699-1705, 1706-1712, and 1713-1719. The tract at residues 1552 to 1726 is C-terminal domain (CTD); 25 X 7 AA approximate tandem repeats of Y-S-P-T-S-P-[TSAN]; the sequence is YSPTSPSYSP…SPQYSPRSPS (175 aa). One copy of the 25; approximate repeat lies at 1720-1726; sequence YSPRSPS. A compositionally biased stretch (basic and acidic residues) spans 1734–1745; the sequence is NDKEQKDENGTH.

It belongs to the RNA polymerase beta' chain family. As to quaternary structure, component of the RNA polymerase II (Pol II) complex consisting of 12 subunits. In terms of processing, the tandem 7 residues repeats in the C-terminal domain (CTD) can be highly phosphorylated. The phosphorylation activates Pol II. Phosphorylation occurs mainly at residues 'Ser-2' and 'Ser-5' of the heptapeptide repeat. The phosphorylation state is believed to result from the balanced action of site-specific CTD kinases and phosphatase, and a 'CTD code' that specifies the position of Pol II within the transcription cycle has been proposed. Following transcription stress, the elongating form of RNA polymerase II (RNA pol IIo) is polyubiquitinated via 'Lys-63'-linkages on Lys-1247 at DNA damage sites without leading to degradation: ubiquitination promotes RNA pol IIo backtracking to allow access by the transcription-coupled nucleotide excision repair (TC-NER) machinery. Subsequent DEF1-dependent polyubiquitination by the elongin complex via 'Lys-48'-linkages may lead to proteasome-mediated degradation; presumably at stalled RNA pol II where TC-NER has failed, to halt global transcription and enable 'last resort' DNA repair pathways.

It localises to the nucleus. It catalyses the reaction RNA(n) + a ribonucleoside 5'-triphosphate = RNA(n+1) + diphosphate. DNA-dependent RNA polymerase catalyzes the transcription of DNA into RNA using the four ribonucleoside triphosphates as substrates. Largest and catalytic component of RNA polymerase II which synthesizes mRNA precursors and many functional non-coding RNAs. Forms the polymerase active center together with the second largest subunit. Pol II is the central component of the basal RNA polymerase II transcription machinery. It is composed of mobile elements that move relative to each other. RPB1 is part of the core element with the central large cleft, the clamp element that moves to open and close the cleft and the jaws that are thought to grab the incoming DNA template. At the start of transcription, a single-stranded DNA template strand of the promoter is positioned within the central active site cleft of Pol II. A bridging helix emanates from RPB1 and crosses the cleft near the catalytic site and is thought to promote translocation of Pol II by acting as a ratchet that moves the RNA-DNA hybrid through the active site by switching from straight to bent conformations at each step of nucleotide addition. During transcription elongation, Pol II moves on the template as the transcript elongates. Elongation is influenced by the phosphorylation status of the C-terminal domain (CTD) of Pol II largest subunit (RPB1), which serves as a platform for assembly of factors that regulate transcription initiation, elongation, termination and mRNA processing. This Eremothecium gossypii (strain ATCC 10895 / CBS 109.51 / FGSC 9923 / NRRL Y-1056) (Yeast) protein is DNA-directed RNA polymerase II subunit RPB1 (RPB1).